The following is a 56-amino-acid chain: Ovomucoid (56 aa).

The 51-residue stretch at 6–56 (VDCSEYPKPACTMEQRPLCGSDNKTYGNKCNFCNAVVESNGTLTLSHFGKC) folds into the Kazal-like domain. 3 disulfide bridges follow: cysteine 8–cysteine 38, cysteine 16–cysteine 35, and cysteine 24–cysteine 56. An N-linked (GlcNAc...) asparagine glycan is attached at asparagine 45.

The protein resides in the secreted. The sequence is that of Ovomucoid from Afropavo congensis (Congo peafowl).